A 369-amino-acid chain; its full sequence is Glutamate 5-kinase (369 aa).

K9 is an ATP binding site. S49, D136, and N148 together coordinate substrate. ATP is bound by residues 168 to 169 (TD) and 210 to 216 (TGGMLTK). The PUA domain occupies 275–355 (RGGVYVDEGA…KGVFIHRDDW (81 aa)).

Belongs to the glutamate 5-kinase family.

It localises to the cytoplasm. The catalysed reaction is L-glutamate + ATP = L-glutamyl 5-phosphate + ADP. The protein operates within amino-acid biosynthesis; L-proline biosynthesis; L-glutamate 5-semialdehyde from L-glutamate: step 1/2. Its function is as follows. Catalyzes the transfer of a phosphate group to glutamate to form L-glutamate 5-phosphate. The chain is Glutamate 5-kinase from Neisseria meningitidis serogroup A / serotype 4A (strain DSM 15465 / Z2491).